The following is a 336-amino-acid chain: N-acetyl-gamma-glutamyl-phosphate reductase (336 aa).

Residue Cys-144 is part of the active site.

This sequence belongs to the NAGSA dehydrogenase family. Type 1 subfamily.

The protein resides in the cytoplasm. It carries out the reaction N-acetyl-L-glutamate 5-semialdehyde + phosphate + NADP(+) = N-acetyl-L-glutamyl 5-phosphate + NADPH + H(+). It functions in the pathway amino-acid biosynthesis; L-arginine biosynthesis; N(2)-acetyl-L-ornithine from L-glutamate: step 3/4. Its function is as follows. Catalyzes the NADPH-dependent reduction of N-acetyl-5-glutamyl phosphate to yield N-acetyl-L-glutamate 5-semialdehyde. The sequence is that of N-acetyl-gamma-glutamyl-phosphate reductase from Methanosarcina acetivorans (strain ATCC 35395 / DSM 2834 / JCM 12185 / C2A).